We begin with the raw amino-acid sequence, 298 residues long: ATP phosphoribosyltransferase (298 aa).

The protein belongs to the ATP phosphoribosyltransferase family. Long subfamily. The cofactor is Mg(2+).

Its subcellular location is the cytoplasm. It carries out the reaction 1-(5-phospho-beta-D-ribosyl)-ATP + diphosphate = 5-phospho-alpha-D-ribose 1-diphosphate + ATP. It functions in the pathway amino-acid biosynthesis; L-histidine biosynthesis; L-histidine from 5-phospho-alpha-D-ribose 1-diphosphate: step 1/9. Its activity is regulated as follows. Feedback inhibited by histidine. Catalyzes the condensation of ATP and 5-phosphoribose 1-diphosphate to form N'-(5'-phosphoribosyl)-ATP (PR-ATP). Has a crucial role in the pathway because the rate of histidine biosynthesis seems to be controlled primarily by regulation of HisG enzymatic activity. This chain is ATP phosphoribosyltransferase, found in Vibrio vulnificus (strain CMCP6).